The following is a 404-amino-acid chain: Neutral protease 2 homolog AFLA_065450 (404 aa).

The first 19 residues, methionine 1–alanine 19, serve as a signal peptide directing secretion. Residues valine 20 to arginine 185 constitute a propeptide that is removed on maturation. Intrachain disulfides connect cysteine 191–cysteine 263 and cysteine 270–cysteine 288. Histidine 313 is a binding site for Zn(2+). The active site involves glutamate 314. Zn(2+) is bound by residues histidine 317 and aspartate 328.

The protein belongs to the peptidase M35 family. The cofactor is Zn(2+).

It localises to the secreted. The catalysed reaction is Preferential cleavage of bonds with hydrophobic residues in P1'. Also 3-Asn-|-Gln-4 and 8-Gly-|-Ser-9 bonds in insulin B chain.. Its function is as follows. Secreted metalloproteinase that allows assimilation of proteinaceous substrates. Shows high activities on basic nuclear substrates such as histone and protamine. In Aspergillus flavus (strain ATCC 200026 / FGSC A1120 / IAM 13836 / NRRL 3357 / JCM 12722 / SRRC 167), this protein is Neutral protease 2 homolog AFLA_065450.